Reading from the N-terminus, the 256-residue chain is Imidazole glycerol phosphate synthase subunit HisF (256 aa).

Residues Asp11 and Asp130 contribute to the active site.

The protein belongs to the HisA/HisF family. As to quaternary structure, heterodimer of HisH and HisF.

It localises to the cytoplasm. It catalyses the reaction 5-[(5-phospho-1-deoxy-D-ribulos-1-ylimino)methylamino]-1-(5-phospho-beta-D-ribosyl)imidazole-4-carboxamide + L-glutamine = D-erythro-1-(imidazol-4-yl)glycerol 3-phosphate + 5-amino-1-(5-phospho-beta-D-ribosyl)imidazole-4-carboxamide + L-glutamate + H(+). It functions in the pathway amino-acid biosynthesis; L-histidine biosynthesis; L-histidine from 5-phospho-alpha-D-ribose 1-diphosphate: step 5/9. IGPS catalyzes the conversion of PRFAR and glutamine to IGP, AICAR and glutamate. The HisF subunit catalyzes the cyclization activity that produces IGP and AICAR from PRFAR using the ammonia provided by the HisH subunit. The protein is Imidazole glycerol phosphate synthase subunit HisF of Prochlorococcus marinus (strain NATL2A).